The following is a 296-amino-acid chain: Homoserine kinase (296 aa).

86 to 96 lines the ATP pocket; sequence KAGSGLGSSAA.

Belongs to the GHMP kinase family. Homoserine kinase subfamily.

Its subcellular location is the cytoplasm. It carries out the reaction L-homoserine + ATP = O-phospho-L-homoserine + ADP + H(+). Its pathway is amino-acid biosynthesis; L-threonine biosynthesis; L-threonine from L-aspartate: step 4/5. In terms of biological role, catalyzes the ATP-dependent phosphorylation of L-homoserine to L-homoserine phosphate. This is Homoserine kinase (thrB) from Methanocaldococcus jannaschii (strain ATCC 43067 / DSM 2661 / JAL-1 / JCM 10045 / NBRC 100440) (Methanococcus jannaschii).